A 246-amino-acid polypeptide reads, in one-letter code: Nodulation protein G (246 aa).

Residue 8 to 32 participates in NAD(+) binding; that stretch reads VTGAMGGLGTAICQALAKDGCIVAA. S140 contacts substrate. Residue Y153 is the Proton acceptor of the active site.

It belongs to the short-chain dehydrogenases/reductases (SDR) family.

In terms of biological role, proposed to modify Nod factor fatty acyl chain. The polypeptide is Nodulation protein G (nodG) (Azospirillum brasilense).